A 124-amino-acid polypeptide reads, in one-letter code: Small ribosomal subunit protein eS6 (124 aa).

This sequence belongs to the eukaryotic ribosomal protein eS6 family.

The protein is Small ribosomal subunit protein eS6 of Methanococcus maripaludis (strain DSM 14266 / JCM 13030 / NBRC 101832 / S2 / LL).